The chain runs to 466 residues: Cysteine--tRNA ligase (466 aa).

Cys-27 contributes to the Zn(2+) binding site. The 'HIGH' region motif lies at 29-39 (PTVYNYIHIGN). Zn(2+) is bound by residues Cys-207, His-232, and Glu-236. Positions 264–268 (KMSKS) match the 'KMSKS' region motif. Residue Lys-267 coordinates ATP.

It belongs to the class-I aminoacyl-tRNA synthetase family. In terms of assembly, monomer. It depends on Zn(2+) as a cofactor.

The protein localises to the cytoplasm. The catalysed reaction is tRNA(Cys) + L-cysteine + ATP = L-cysteinyl-tRNA(Cys) + AMP + diphosphate. In Thermoanaerobacter pseudethanolicus (strain ATCC 33223 / 39E) (Clostridium thermohydrosulfuricum), this protein is Cysteine--tRNA ligase.